A 586-amino-acid chain; its full sequence is Laccase-9 (586 aa).

An N-terminal signal peptide occupies residues Met1–Ala25. Plastocyanin-like domains lie at His33–Gly149 and Lys159–Ala307. N-linked (GlcNAc...) asparagine glycosylation is found at Asn52, Asn74, and Asn79. 2 residues coordinate Cu cation: His83 and His85. Asn111 is a glycosylation site (N-linked (GlcNAc...) asparagine). Cu cation contacts are provided by His128 and His130. Residues Asn236, Asn333, Asn385, Asn403, and Asn451 are each glycosylated (N-linked (GlcNAc...) asparagine). The Plastocyanin-like 3 domain occupies Asp411–Pro552. Cu cation contacts are provided by His469, His472, His474, His531, Cys532, His533, and His537.

The protein belongs to the multicopper oxidase family. Requires Cu cation as cofactor. In terms of tissue distribution, predominantly expressed in roots.

The protein localises to the secreted. It is found in the extracellular space. The protein resides in the apoplast. The enzyme catalyses 4 hydroquinone + O2 = 4 benzosemiquinone + 2 H2O. Lignin degradation and detoxification of lignin-derived products. The chain is Laccase-9 (LAC9) from Arabidopsis thaliana (Mouse-ear cress).